The following is a 533-amino-acid chain: Probable lipid II flippase MurJ (533 aa).

13 consecutive transmembrane segments (helical) span residues 25–45 (ETLMAAALGTGPMADVFYAAF), 90–110 (VLFSVLLLITIVMELAMPLLV), 131–151 (LAAVMFPYLMSMSLTAMMSGM), 158–178 (FFAAAVAPIFLNLVMISALFY), 192–212 (YLSWSVLVAGVLQLAVVYIGV), 233–253 (LLLLAIPAAITGGVTQINLVI), 274–294 (IYQLPLGVVGVAVGIVLLPEL), 316–336 (FVLFLTLPAAVALWLLSDDII), 350–370 (TTLVGSILAIFGLGLPAFVLI), 389–409 (YTAIAVAVNSALSILLFPVLA), 412–432 (GIALAEAVAGWLNAVQLFVTL), 449–469 (AMLLVSSAVMGGVIVYLSHRW), and 484–504 (GVLGLLILIAMAVYFIVAFLI).

Belongs to the MurJ/MviN family.

The protein localises to the cell inner membrane. The protein operates within cell wall biogenesis; peptidoglycan biosynthesis. Functionally, involved in peptidoglycan biosynthesis. Transports lipid-linked peptidoglycan precursors from the inner to the outer leaflet of the cytoplasmic membrane. This Rhizobium tropici protein is Probable lipid II flippase MurJ.